The sequence spans 86 residues: uncharacterized protein (86 aa).

The next 2 helical transmembrane spans lie at 20-38 (IQFW…SVYL) and 47-63 (FSTF…TKGV). Residues 67–86 (LSQRREQGKEQGREQGREQE) form a disordered region. A compositionally biased stretch (basic and acidic residues) spans 69-86 (QRREQGKEQGREQGREQE).

It localises to the cell membrane. This is an uncharacterized protein from Haemophilus influenzae (strain ATCC 51907 / DSM 11121 / KW20 / Rd).